Here is a 207-residue protein sequence, read N- to C-terminus: Large ribosomal subunit protein uL4 (207 aa).

A disordered region spans residues 57-78; sequence VAGGGKKPWRQKGTGRARHGSI. A compositionally biased stretch (basic residues) spans 63-77; sequence KPWRQKGTGRARHGS.

It belongs to the universal ribosomal protein uL4 family. As to quaternary structure, part of the 50S ribosomal subunit.

In terms of biological role, one of the primary rRNA binding proteins, this protein initially binds near the 5'-end of the 23S rRNA. It is important during the early stages of 50S assembly. It makes multiple contacts with different domains of the 23S rRNA in the assembled 50S subunit and ribosome. Its function is as follows. Forms part of the polypeptide exit tunnel. The sequence is that of Large ribosomal subunit protein uL4 from Onion yellows phytoplasma (strain OY-M).